The sequence spans 71 residues: Large ribosomal subunit protein bL31 (71 aa).

Zn(2+) contacts are provided by Cys16, Cys18, Cys37, and Cys40.

The protein belongs to the bacterial ribosomal protein bL31 family. Type A subfamily. Part of the 50S ribosomal subunit. Requires Zn(2+) as cofactor.

Binds the 23S rRNA. The protein is Large ribosomal subunit protein bL31 of Wigglesworthia glossinidia brevipalpis.